A 141-amino-acid polypeptide reads, in one-letter code: Ribosome-binding factor A (141 aa).

Positions 120–141 (SPHVQRDLQENDDQEDDSEGSL) are disordered. Over residues 129 to 141 (ENDDQEDDSEGSL) the composition is skewed to acidic residues.

It belongs to the RbfA family. Monomer. Binds 30S ribosomal subunits, but not 50S ribosomal subunits or 70S ribosomes.

It is found in the cytoplasm. Its function is as follows. One of several proteins that assist in the late maturation steps of the functional core of the 30S ribosomal subunit. Associates with free 30S ribosomal subunits (but not with 30S subunits that are part of 70S ribosomes or polysomes). Required for efficient processing of 16S rRNA. May interact with the 5'-terminal helix region of 16S rRNA. The protein is Ribosome-binding factor A of Zymomonas mobilis subsp. mobilis (strain ATCC 31821 / ZM4 / CP4).